Consider the following 430-residue polypeptide: UDP-N-acetylglucosamine 1-carboxyvinyltransferase 1 (430 aa).

22–23 serves as a coordination point for phosphoenolpyruvate; sequence KN. Arg-93 contributes to the UDP-N-acetyl-alpha-D-glucosamine binding site. Cys-117 acts as the Proton donor in catalysis. The residue at position 117 (Cys-117) is a 2-(S-cysteinyl)pyruvic acid O-phosphothioketal. UDP-N-acetyl-alpha-D-glucosamine contacts are provided by residues 122–126, Asp-305, and Val-327; that span reads RPVDL.

It belongs to the EPSP synthase family. MurA subfamily.

The protein resides in the cytoplasm. It catalyses the reaction phosphoenolpyruvate + UDP-N-acetyl-alpha-D-glucosamine = UDP-N-acetyl-3-O-(1-carboxyvinyl)-alpha-D-glucosamine + phosphate. Its pathway is cell wall biogenesis; peptidoglycan biosynthesis. Functionally, cell wall formation. Adds enolpyruvyl to UDP-N-acetylglucosamine. This Listeria monocytogenes serotype 4b (strain F2365) protein is UDP-N-acetylglucosamine 1-carboxyvinyltransferase 1.